A 412-amino-acid chain; its full sequence is NADH-quinone oxidoreductase subunit D (412 aa).

The protein belongs to the complex I 49 kDa subunit family. In terms of assembly, NDH-1 is composed of 14 different subunits. Subunits NuoB, C, D, E, F, and G constitute the peripheral sector of the complex.

It localises to the cell inner membrane. The catalysed reaction is a quinone + NADH + 5 H(+)(in) = a quinol + NAD(+) + 4 H(+)(out). Its function is as follows. NDH-1 shuttles electrons from NADH, via FMN and iron-sulfur (Fe-S) centers, to quinones in the respiratory chain. The immediate electron acceptor for the enzyme in this species is believed to be ubiquinone. Couples the redox reaction to proton translocation (for every two electrons transferred, four hydrogen ions are translocated across the cytoplasmic membrane), and thus conserves the redox energy in a proton gradient. The sequence is that of NADH-quinone oxidoreductase subunit D from Sulfurimonas denitrificans (strain ATCC 33889 / DSM 1251) (Thiomicrospira denitrificans (strain ATCC 33889 / DSM 1251)).